A 195-amino-acid chain; its full sequence is Imidazoleglycerol-phosphate dehydratase (195 aa).

It belongs to the imidazoleglycerol-phosphate dehydratase family.

Its subcellular location is the cytoplasm. It catalyses the reaction D-erythro-1-(imidazol-4-yl)glycerol 3-phosphate = 3-(imidazol-4-yl)-2-oxopropyl phosphate + H2O. It functions in the pathway amino-acid biosynthesis; L-histidine biosynthesis; L-histidine from 5-phospho-alpha-D-ribose 1-diphosphate: step 6/9. The sequence is that of Imidazoleglycerol-phosphate dehydratase from Desulfosudis oleivorans (strain DSM 6200 / JCM 39069 / Hxd3) (Desulfococcus oleovorans).